The primary structure comprises 287 residues: Protease HtpX (287 aa).

The next 2 helical transmembrane spans lie at 4-24 (IFLL…VMSI) and 33-53 (GGLL…SLAI). A Zn(2+)-binding site is contributed by His139. The active site involves Glu140. Residue His143 participates in Zn(2+) binding. 2 helical membrane-spanning segments follow: residues 154–174 (LIQG…AGII) and 195–215 (AVVF…VAYF). Glu220 contacts Zn(2+).

The protein belongs to the peptidase M48B family. Zn(2+) is required as a cofactor.

The protein localises to the cell inner membrane. The chain is Protease HtpX from Shewanella putrefaciens (strain CN-32 / ATCC BAA-453).